The sequence spans 464 residues: 3-isopropylmalate dehydratase large subunit (464 aa).

Residues Cys337, Cys397, and Cys400 each contribute to the [4Fe-4S] cluster site.

This sequence belongs to the aconitase/IPM isomerase family. LeuC type 1 subfamily. In terms of assembly, heterodimer of LeuC and LeuD. [4Fe-4S] cluster is required as a cofactor.

The catalysed reaction is (2R,3S)-3-isopropylmalate = (2S)-2-isopropylmalate. The protein operates within amino-acid biosynthesis; L-leucine biosynthesis; L-leucine from 3-methyl-2-oxobutanoate: step 2/4. Its function is as follows. Catalyzes the isomerization between 2-isopropylmalate and 3-isopropylmalate, via the formation of 2-isopropylmaleate. The chain is 3-isopropylmalate dehydratase large subunit from Bacillus cereus (strain G9842).